A 270-amino-acid chain; its full sequence is Phthiotriol/phenolphthiotriol dimycocerosates methyltransferase (270 aa).

It belongs to the methyltransferase superfamily. Phthiotriol/phenolphthiotriol dimycocerosates methyltransferase family.

Catalyzes the methylation of the lipid moiety of the intermediate compounds phthiotriol and glycosylated phenolphthiotriol dimycoserosates to form phthiocerol dimycocerosates (DIM A) and glycosylated phenolphthiocerol dimycocerosates (PGL). The chain is Phthiotriol/phenolphthiotriol dimycocerosates methyltransferase from Mycobacterium bovis (strain ATCC BAA-935 / AF2122/97).